The following is a 327-amino-acid chain: Acetaldehyde dehydrogenase 6 (327 aa).

Position 15 to 18 (15 to 18 (SGNI)) interacts with NAD(+). Cys-133 functions as the Acyl-thioester intermediate in the catalytic mechanism. Residues 164-172 (SAGPGTRAN) and Asn-297 contribute to the NAD(+) site.

The protein belongs to the acetaldehyde dehydrogenase family.

The enzyme catalyses acetaldehyde + NAD(+) + CoA = acetyl-CoA + NADH + H(+). This is Acetaldehyde dehydrogenase 6 from Rhodococcus opacus (strain B4).